The chain runs to 408 residues: NADH-quinone oxidoreductase subunit D (408 aa).

This sequence belongs to the complex I 49 kDa subunit family. NDH-1 is composed of 14 different subunits. Subunits NuoB, C, D, E, F, and G constitute the peripheral sector of the complex.

It is found in the cell inner membrane. The catalysed reaction is a quinone + NADH + 5 H(+)(in) = a quinol + NAD(+) + 4 H(+)(out). In terms of biological role, NDH-1 shuttles electrons from NADH, via FMN and iron-sulfur (Fe-S) centers, to quinones in the respiratory chain. The immediate electron acceptor for the enzyme in this species is believed to be ubiquinone. Couples the redox reaction to proton translocation (for every two electrons transferred, four hydrogen ions are translocated across the cytoplasmic membrane), and thus conserves the redox energy in a proton gradient. The protein is NADH-quinone oxidoreductase subunit D of Campylobacter jejuni subsp. jejuni serotype O:6 (strain 81116 / NCTC 11828).